Reading from the N-terminus, the 500-residue chain is Melanopsin (500 aa).

The Extracellular portion of the chain corresponds to 1-65 (MSHHSSWRGH…TVDVPDHAHY (65 aa)). The N-linked (GlcNAc...) asparagine glycan is linked to Asn18. Residues 66 to 86 (IIGAVILIVGITGVIGNALVI) traverse the membrane as a helical segment. The Cytoplasmic portion of the chain corresponds to 87 to 101 (YVFCRSRTLRTAGNM). Residues 102 to 122 (FVVNLAVADFFMSLTQSPVFF) traverse the membrane as a helical segment. Over 123 to 138 (AASLHRRWIFGERICE) the chain is Extracellular. Cys137 and Cys215 are oxidised to a cystine. A helical transmembrane segment spans residues 139–159 (LYAFCGALFGICSMMTLTAIA). The Cytoplasmic portion of the chain corresponds to 160 to 182 (ADRCLAITQPLALVGNVSRRKAG). Residues 183–203 (AVLAVVWLYSLGWSLPPFFGW) form a helical membrane-spanning segment. Over 204-232 (SAYVPEGLQTSCSWDYMTFTPSVRAYTIL) the chain is Extracellular. A helical membrane pass occupies residues 233-253 (LFIFVFFIPLGIIVSCYVGIF). Topologically, residues 254–286 (QAIRAMGKEIRELDCGETQKVYERMQNEWKMAK) are cytoplasmic. A helical membrane pass occupies residues 287-307 (IALLVILLFVISWSPYSVVAL). Residues 308–322 (TATAGYSHLLTPYMN) lie on the Extracellular side of the membrane. A helical transmembrane segment spans residues 323–343 (SVPAVIAKASAIHNPIIYAIT). At Lys330 the chain carries N6-(retinylidene)lysine. Residues 344–500 (HPKYRAAIAR…DGKALLLGGN (157 aa)) are Cytoplasmic-facing. 3 disordered regions span residues 406-428 (GKKRLSSASDSDSCWTESEADGS), 448-470 (VILSPGSSNSTASGQKSEKAHKV), and 481-500 (ETDSADESLSDGKALLLGGN). Composition is skewed to polar residues over residues 411–428 (SSASDSDSCWTESEADGS) and 448–462 (VILSPGSSNSTASGQ).

It belongs to the G-protein coupled receptor 1 family. Opsin subfamily. Expressed in a subset of retinal horizontal cells as well as in retinal ganglion cells.

It is found in the cell membrane. Photoreceptor implicated in non-image-forming responses to light. This chain is Melanopsin (opn4), found in Rutilus rutilus (Roach).